The sequence spans 945 residues: Isoleucine--tRNA ligase (945 aa).

Positions 66-76 match the 'HIGH' region motif; that stretch reads PYANGDIHLGH. E581 serves as a coordination point for L-isoleucyl-5'-AMP. The 'KMSKS' region motif lies at 622-626; sequence KMSKS. K625 is a binding site for ATP. Zn(2+) contacts are provided by C908, C911, C928, and C931.

This sequence belongs to the class-I aminoacyl-tRNA synthetase family. IleS type 1 subfamily. As to quaternary structure, monomer. The cofactor is Zn(2+).

Its subcellular location is the cytoplasm. It catalyses the reaction tRNA(Ile) + L-isoleucine + ATP = L-isoleucyl-tRNA(Ile) + AMP + diphosphate. Its function is as follows. Catalyzes the attachment of isoleucine to tRNA(Ile). As IleRS can inadvertently accommodate and process structurally similar amino acids such as valine, to avoid such errors it has two additional distinct tRNA(Ile)-dependent editing activities. One activity is designated as 'pretransfer' editing and involves the hydrolysis of activated Val-AMP. The other activity is designated 'posttransfer' editing and involves deacylation of mischarged Val-tRNA(Ile). This is Isoleucine--tRNA ligase from Burkholderia cenocepacia (strain ATCC BAA-245 / DSM 16553 / LMG 16656 / NCTC 13227 / J2315 / CF5610) (Burkholderia cepacia (strain J2315)).